Consider the following 173-residue polypeptide: Nicotinamide-nucleotide adenylyltransferase (173 aa).

The protein belongs to the archaeal NMN adenylyltransferase family.

It is found in the cytoplasm. It carries out the reaction beta-nicotinamide D-ribonucleotide + ATP + H(+) = diphosphate + NAD(+). Its pathway is cofactor biosynthesis; NAD(+) biosynthesis; NAD(+) from nicotinamide D-ribonucleotide: step 1/1. This is Nicotinamide-nucleotide adenylyltransferase from Methanosarcina mazei (strain ATCC BAA-159 / DSM 3647 / Goe1 / Go1 / JCM 11833 / OCM 88) (Methanosarcina frisia).